The following is a 480-amino-acid chain: Uronate isomerase (480 aa).

It belongs to the metallo-dependent hydrolases superfamily. Uronate isomerase family.

It carries out the reaction D-glucuronate = D-fructuronate. It catalyses the reaction aldehydo-D-galacturonate = keto-D-tagaturonate. Its pathway is carbohydrate metabolism; pentose and glucuronate interconversion. This chain is Uronate isomerase, found in Phenylobacterium zucineum (strain HLK1).